The following is a 131-amino-acid chain: Ribosome-binding factor A (131 aa).

This sequence belongs to the RbfA family. Monomer. Binds 30S ribosomal subunits, but not 50S ribosomal subunits or 70S ribosomes.

It localises to the cytoplasm. In terms of biological role, one of several proteins that assist in the late maturation steps of the functional core of the 30S ribosomal subunit. Associates with free 30S ribosomal subunits (but not with 30S subunits that are part of 70S ribosomes or polysomes). Required for efficient processing of 16S rRNA. May interact with the 5'-terminal helix region of 16S rRNA. This is Ribosome-binding factor A from Pseudomonas fluorescens (strain SBW25).